Reading from the N-terminus, the 378-residue chain is 1-acyl-sn-glycerol-3-phosphate acyltransferase delta (378 aa).

The helical transmembrane segment at 11-31 (FLCHLIFCYVFIVSGLIINTI) threads the bilayer. Residues 96 to 101 (HKFEID) carry the HXXXXD motif motif. The next 3 membrane-spanning stretches (helical) occupy residues 125-145 (ELAYVPIIGWMWYFTEMVFCT), 307-327 (TLVNWLFWASMLLYPFFRFVI), and 338-358 (LASFVLVFFVASMGVRWMIGV).

This sequence belongs to the 1-acyl-sn-glycerol-3-phosphate acyltransferase family.

The protein localises to the endoplasmic reticulum membrane. It catalyses the reaction a 1-acyl-sn-glycero-3-phosphate + an acyl-CoA = a 1,2-diacyl-sn-glycero-3-phosphate + CoA. The catalysed reaction is (4Z,7Z,10Z,13Z,16Z,19Z)-docosahexaenoyl-CoA + 1-hexadecanoyl-sn-glycero-3-phosphate = 1-hexadecanoyl-2-(4Z,7Z,10Z,13Z,16Z,19Z-docosahexaenoyl)-sn-glycero-3-phosphate + CoA. It carries out the reaction 1-octadecanoyl-sn-glycero-3-phosphate + (9Z,12Z)-octadecadienoyl-CoA = 1-octadecanoyl-2-(9Z,12Z-octadecadienoyl)-sn-glycero-3-phosphate + CoA. The enzyme catalyses 1-octadecanoyl-sn-glycero-3-phosphate + (4Z,7Z,10Z,13Z,16Z,19Z)-docosahexaenoyl-CoA = 1-octadecanoyl-2-(4Z,7Z,10Z,13Z,16Z,19Z-docosahexaenoyl)-sn-glycero-3-phosphate + CoA. It catalyses the reaction (4Z,7Z,10Z,13Z,16Z,19Z)-docosahexaenoyl-CoA + 1-(9Z-octadecenoyl)-sn-glycero-3-phosphate = 1-(9Z-octadecenoyl)-2-(4Z,7Z,10Z,13Z,16Z,19Z-docosahexaenoyl)-sn-glycero-3-phosphate + CoA. Its pathway is phospholipid metabolism; CDP-diacylglycerol biosynthesis; CDP-diacylglycerol from sn-glycerol 3-phosphate: step 2/3. Functionally, converts 1-acyl-sn-glycerol-3-phosphate (lysophosphatidic acid or LPA) into 1,2-diacyl-sn-glycerol-3-phosphate (phosphatidic acid or PA) by incorporating an acyl moiety at the sn-2 position of the glycerol backbone. Exhibits high acyl-CoA specificity for polyunsaturated fatty acyl-CoA, especially docosahexaenoyl-CoA (22:6-CoA, DHA-CoA). The chain is 1-acyl-sn-glycerol-3-phosphate acyltransferase delta (AGPAT4) from Bos taurus (Bovine).